The sequence spans 672 residues: Transmembrane 9 superfamily member 2 (672 aa).

Positions 1–18 are cleaved as a signal peptide; the sequence is MKRGVWLLIYCYATLTKG. Over 19–307 the chain is Extracellular; it reads FSLPGLSPTT…DKYLHIYDPQ (289 aa). The helical transmembrane segment at 308-328 threads the bilayer; the sequence is IQWFSLINFSVIVILLSSVVM. The Cytoplasmic portion of the chain corresponds to 329 to 383; it reads HSLLRALKSDLARYNELNLDNEFHEDSGWKLGHGDVFRTPSKSMLLSILVGSGMQ. Residues 384 to 404 traverse the membrane as a helical segment; sequence LFLMVMCSIFFAAVGLVSPVS. The Extracellular segment spans residues 405–410; it reads RGSLPT. The chain crosses the membrane as a helical span at residues 411–431; it reads VMFVLYALFGFVGSYASMGVY. Topologically, residues 432 to 447 are cytoplasmic; the sequence is KFFRGPYWKANMILTP. The helical transmembrane segment at 448–468 threads the bilayer; it reads ILLPGAIFLLIVIMNFFLLFA. At 469–479 the chain is on the extracellular side; the sequence is HSSGVIPARSL. The helical transmembrane segment at 480–500 threads the bilayer; the sequence is FFIILLWFLVSVPLSFAGSIV. The Cytoplasmic segment spans residues 501–532; it reads AHKQCNWDEHPTKTNQIARQIPYQPWYLRTAQ. A helical membrane pass occupies residues 533–553; sequence ATLIAGIFSFGSIAVELYFIY. Residues 554–565 are Extracellular-facing; sequence SSLWFNKIFYMF. The chain crosses the membrane as a helical span at residues 566 to 586; that stretch reads GFLLFSFLLLTLTTSLVTILI. The Cytoplasmic portion of the chain corresponds to 587–601; the sequence is TYYSLCLENWLWQWR. A helical membrane pass occupies residues 602 to 622; it reads SFIIGGLGCSIYTFIHSILFT. The Extracellular segment spans residues 623 to 628; it reads KFKLGG. A helical transmembrane segment spans residues 629-649; the sequence is VITVVLYLGYSLIISALCCVV. Over 650 to 672 the chain is Cytoplasmic; that stretch reads TGAIGFFSSMFFIRKIYSAIKVE.

Belongs to the nonaspanin (TM9SF) (TC 9.A.2) family.

It is found in the vacuole membrane. In terms of biological role, with EMP70 and TMN3, plays a critical role in the late stages of a nutrient-controlled pathway notably regulating FLO11 gene expression. Acts downstream of RAS2 and TOR. Essential for cell adhesion and filamentous growth. May play a role as effector of cellular copper homeostasis. The sequence is that of Transmembrane 9 superfamily member 2 (TMN2) from Saccharomyces cerevisiae (strain ATCC 204508 / S288c) (Baker's yeast).